Reading from the N-terminus, the 177-residue chain is Large ribosomal subunit protein uL6 (177 aa).

This sequence belongs to the universal ribosomal protein uL6 family. As to quaternary structure, part of the 50S ribosomal subunit.

Its function is as follows. This protein binds to the 23S rRNA, and is important in its secondary structure. It is located near the subunit interface in the base of the L7/L12 stalk, and near the tRNA binding site of the peptidyltransferase center. This Erwinia tasmaniensis (strain DSM 17950 / CFBP 7177 / CIP 109463 / NCPPB 4357 / Et1/99) protein is Large ribosomal subunit protein uL6.